The sequence spans 155 residues: Protein-export protein SecB (155 aa).

This sequence belongs to the SecB family. As to quaternary structure, homotetramer, a dimer of dimers. One homotetramer interacts with 1 SecA dimer.

Its subcellular location is the cytoplasm. Its function is as follows. One of the proteins required for the normal export of preproteins out of the cell cytoplasm. It is a molecular chaperone that binds to a subset of precursor proteins, maintaining them in a translocation-competent state. It also specifically binds to its receptor SecA. This chain is Protein-export protein SecB, found in Psychromonas ingrahamii (strain DSM 17664 / CCUG 51855 / 37).